The following is a 299-amino-acid chain: MLDRIKLGLNHILPKKALTELAGWGAGKRGGRLTKAVIDAFVWYYKVDMKEAQKPDTASYRTFNDFFVRPLRDEARPIETDPNQLVLPADGAISQLGPIEGDQIFQAKGHTYSLEALLAGNAAMTDMFRDGEFVTTYLAPRDYHRVHMPCNGILREMIYVPGDLYSVNPLTAQNIPNLFARNERVICRFDTEFGPMVQILVGATIVGSIETVWSGTVTPPREGVIKRWSWPGADEEGAVVLLKGQEMGRFKLGSTVINLFAPGKVKLAESLTAGSQTRLGATLATALQKESAEDVLHHP.

Residues Asp-90, His-147, and Ser-254 each act as charge relay system; for autoendoproteolytic cleavage activity in the active site. Ser-254 functions as the Schiff-base intermediate with substrate; via pyruvic acid; for decarboxylase activity in the catalytic mechanism. Position 254 is a pyruvic acid (Ser); by autocatalysis (Ser-254).

The protein belongs to the phosphatidylserine decarboxylase family. PSD-B subfamily. Prokaryotic type I sub-subfamily. In terms of assembly, heterodimer of a large membrane-associated beta subunit and a small pyruvoyl-containing alpha subunit. The cofactor is pyruvate. In terms of processing, is synthesized initially as an inactive proenzyme. Formation of the active enzyme involves a self-maturation process in which the active site pyruvoyl group is generated from an internal serine residue via an autocatalytic post-translational modification. Two non-identical subunits are generated from the proenzyme in this reaction, and the pyruvate is formed at the N-terminus of the alpha chain, which is derived from the carboxyl end of the proenzyme. The autoendoproteolytic cleavage occurs by a canonical serine protease mechanism, in which the side chain hydroxyl group of the serine supplies its oxygen atom to form the C-terminus of the beta chain, while the remainder of the serine residue undergoes an oxidative deamination to produce ammonia and the pyruvoyl prosthetic group on the alpha chain. During this reaction, the Ser that is part of the protease active site of the proenzyme becomes the pyruvoyl prosthetic group, which constitutes an essential element of the active site of the mature decarboxylase.

The protein resides in the cell membrane. It catalyses the reaction a 1,2-diacyl-sn-glycero-3-phospho-L-serine + H(+) = a 1,2-diacyl-sn-glycero-3-phosphoethanolamine + CO2. The protein operates within phospholipid metabolism; phosphatidylethanolamine biosynthesis; phosphatidylethanolamine from CDP-diacylglycerol: step 2/2. Its function is as follows. Catalyzes the formation of phosphatidylethanolamine (PtdEtn) from phosphatidylserine (PtdSer). This Erwinia tasmaniensis (strain DSM 17950 / CFBP 7177 / CIP 109463 / NCPPB 4357 / Et1/99) protein is Phosphatidylserine decarboxylase proenzyme.